The primary structure comprises 161 residues: MTATKPSPKSMLSLDLGKRRIGLAGCDPLGITVSPLPPLQRKSFERDLKVLQWHCTSRKVEGLVVGLPLDAKGLPTDQARHYERYGQRLARALKLPLALVNEHSSSWAAAERYNLQGDRSGQLDSAAAALLLEQWLREGPELKPVHVAAHPVSQVNSDSGS.

It belongs to the YqgF nuclease family.

The protein localises to the cytoplasm. Functionally, could be a nuclease involved in processing of the 5'-end of pre-16S rRNA. This Prochlorococcus marinus (strain MIT 9313) protein is Putative pre-16S rRNA nuclease.